We begin with the raw amino-acid sequence, 42 residues long: Crotamine-IV-2 (42 aa).

3 disulfide bridges follow: C4–C37, C11–C31, and C19–C38.

This sequence belongs to the crotamine-myotoxin family. Monomer. Expressed by the venom gland.

The protein resides in the secreted. Cationic peptide that possesses multiple functions. It acts as a cell-penetrating peptide (CPP), and as a potent voltage-gated potassium channel (Kv) inhibitor. It exhibits antimicrobial activities, and hind limb paralysis. It also induces potent blockade of neuromuscular transmission in young chicken biventer cervicis preparation and potent myotoxic effect. In vivo, induces myonecrosis, upon intramuscular or subcutaneous injections into mice. The chain is Crotamine-IV-2 from Crotalus durissus cumanensis (South American rattlesnake).